Consider the following 199-residue polypeptide: Pneumococcal vaccine antigen A homolog (199 aa).

The protein localises to the cell surface. In Streptococcus pyogenes serotype M18 (strain MGAS8232), this protein is Pneumococcal vaccine antigen A homolog (pvaA).